We begin with the raw amino-acid sequence, 67 residues long: Mu-conotoxin TsIIIA (67 aa).

The signal sequence occupies residues 1-20; the sequence is MMSKLGVLLTICLLLFPLTA. Positions 21–48 are excised as a propeptide; sequence VPLDGDQPADQPAERKQNEQHPLFDQKR. 3 cysteine pairs are disulfide-bonded: cysteine 50–cysteine 59, cysteine 51–cysteine 64, and cysteine 55–cysteine 65.

It belongs to the conotoxin M superfamily. Expressed by the venom duct.

Its subcellular location is the secreted. In terms of biological role, mu-conotoxins block voltage-gated sodium channels (Nav). This toxin specifically inhibits mammalian Nav1.8/SCN10A sodium currents (IC(50)=2.11 uM) without inducing a shift in the current-voltage relationship of this channel. In vivo, shows potent analgesic activity in a mice hotplate analgesic assay. In addition, this toxin has better analgesic effects than Ziconotide, an analgesic drug. The chain is Mu-conotoxin TsIIIA from Conus tessulatus (Tessellate cone).